The following is a 285-amino-acid chain: Small ribosomal subunit protein uS2 (285 aa).

Residues 229 to 285 (RHNGKSNAAEEPMAEWERELLEQHEEQKSQDAAPAEQSAPAAEAPAETEQKDAPAAE) are disordered. Basic and acidic residues predominate over residues 243-257 (EWERELLEQHEEQKS). Residues 260-275 (AAPAEQSAPAAEAPAE) are compositionally biased toward low complexity. The segment covering 276–285 (TEQKDAPAAE) has biased composition (basic and acidic residues).

The protein belongs to the universal ribosomal protein uS2 family.

The polypeptide is Small ribosomal subunit protein uS2 (Kocuria rhizophila (strain ATCC 9341 / DSM 348 / NBRC 103217 / DC2201)).